A 184-amino-acid chain; its full sequence is Troponin I, slow skeletal muscle (184 aa).

Proline 1 is subject to N-acetylproline; partial. Positions 1–45 (PEVERKSKITASRKLLKSLMLAKAKECQQEHEAREAEKVRYLAER) are involved in binding TNC. Serine 55 carries the post-translational modification Phosphoserine. An involved in binding TNC and actin region spans residues 94–115 (LKLKVLDLRGKFKRPPLRRVRV).

Belongs to the troponin I family. In terms of assembly, binds to actin and tropomyosin. Post-translationally, in the muscle sample, approximately 25% of the chains were blocked. Pro-1 is probably acetylated. The N-terminus is blocked.

Troponin I is the inhibitory subunit of troponin, the thin filament regulatory complex which confers calcium-sensitivity to striated muscle actomyosin ATPase activity. This Oryctolagus cuniculus (Rabbit) protein is Troponin I, slow skeletal muscle (TNNI1).